Reading from the N-terminus, the 590-residue chain is Probable lysosomal cobalamin transporter (590 aa).

Helical transmembrane passes span 8 to 28, 46 to 66, 94 to 114, 145 to 165, 190 to 210, 314 to 334, 348 to 367, 376 to 396, 421 to 441, and 508 to 528; these read LIWV…SIFI, IFTL…VALV, AVAY…VVPF, TVAF…VPIG, ALTF…VLYT, LLSG…MLLT, CGYI…VFVH, YILF…GIAT, ITTV…SMVV, and FFGI…LLVF. Residues 567–590 are disordered; it reads WEDITGRASRSPQVSGSAGRGTRE.

It belongs to the LIMR family. LMBRD1 subfamily.

It is found in the lysosome membrane. In terms of biological role, probable lysosomal cobalamin transporter. Required to export cobalamin from lysosomes allowing its conversion to cofactors. The protein is Probable lysosomal cobalamin transporter of Ajellomyces capsulatus (strain NAm1 / WU24) (Darling's disease fungus).